A 284-amino-acid chain; its full sequence is Tropomyosin alpha-1 chain (284 aa).

The segment at 1–37 is disordered; sequence MDAIKKKMQMLKLDKENALDRAEQAETDKKAAEERSK. Positions 1–284 form a coiled coil; the sequence is MDAIKKKMQM…DHALNDMTSI (284 aa). Residues 12–37 show a composition bias toward basic and acidic residues; that stretch reads KLDKENALDRAEQAETDKKAAEERSK.

It belongs to the tropomyosin family. In terms of assembly, homodimer. Heterodimer of an alpha (TPM1, TPM3 or TPM4) and a beta (TPM2) chain.

The protein resides in the cytoplasm. The protein localises to the cytoskeleton. In terms of biological role, binds to actin filaments in muscle and non-muscle cells. Plays a central role, in association with the troponin complex, in the calcium dependent regulation of vertebrate striated muscle contraction. Smooth muscle contraction is regulated by interaction with caldesmon. In non-muscle cells is implicated in stabilizing cytoskeleton actin filaments. The polypeptide is Tropomyosin alpha-1 chain (tpma) (Danio rerio (Zebrafish)).